The chain runs to 900 residues: Nonribosomal peptide synthetase AMT10 (900 aa).

The segment at 284 to 686 is adenylation; sequence KQAQQNPAAM…ARRNGYIKLR (403 aa). Residues 824–900 enclose the Carrier domain; it reads ELQSDMERYL…QMARNCSLLD (77 aa). The residue at position 861 (Ser-861) is an O-(pantetheine 4'-phosphoryl)serine.

Belongs to the NRP synthetase family.

The protein operates within mycotoxin biosynthesis. Functionally, nonribosomal peptide synthetase; part of the gene clusters that mediate the biosynthesis of AM-toxins, host-selective toxins (HSTs) causing Alternaria blotch on apple, a worldwide distributed disease. AM-toxins are cyclic depsipeptides containing the 3 residues 2-hydroxy-isovaleric acid (2-HIV), dehydroalanine, L-alanine which are common for all 3 AM-toxins I to III. The fourth precursor is L-alpha-amino-methoxyphenyl-valeric acid (L-Amv) for AM-toxin I, L-alpha-amino-phenyl-valeric acid (L-Apv) for AM-toxin II, and L-alpha-amino-hydroxyphenyl-valeric acid (L-Ahv) for AM-toxin III. AM-toxins have two target sites for affecting susceptible apple cells; they cause invagination of the plasma membrane and electrolyte loss and chloroplast disorganization. The non-ribosomal peptide synthetase AMT1 contains 4 catalytic modules and is responsible for activation of each residue in AM-toxin. The aldo-keto reductase AMT2 catalyzes the conversion of 2-keto-isovaleric acid (2-KIV) to 2-hydroxy-isovaleric acid (2-HIV), one of the precursor residues incorporated by AMT1 during AM-toxin biosynthesis, by reduction of its ketone to an alcohol. The cytochrome P450 monooxygenase AMT3 and the thioesterase AMT4 are also important for AM-toxin production, but their exact function within the AM-toxin biosynthesis are not known yet. Up to 21 proteins (including AMT1 to AMT4) are predicted to be involved in AM-toxin biosynthesis since their expression ishighly up-regulated in AM-toxin-producing cultures. In Alternaria alternata (Alternaria rot fungus), this protein is Nonribosomal peptide synthetase AMT10.